A 298-amino-acid polypeptide reads, in one-letter code: Glutamyl-Q tRNA(Asp) synthetase (298 aa).

L-glutamate contacts are provided by residues 9 to 13 (RFAPS) and Glu45. Residues 12–22 (PSPSGELHFGS) carry the 'HIGH' region motif. Zn(2+) is bound by residues Cys101, Cys103, Tyr115, and Cys119. 2 residues coordinate L-glutamate: Tyr172 and Arg190. Residues 228–232 (KLSKQ) carry the 'KMSKS' region motif. Lys231 is a binding site for ATP.

The protein belongs to the class-I aminoacyl-tRNA synthetase family. GluQ subfamily. Zn(2+) is required as a cofactor.

In terms of biological role, catalyzes the tRNA-independent activation of glutamate in presence of ATP and the subsequent transfer of glutamate onto a tRNA(Asp). Glutamate is transferred on the 2-amino-5-(4,5-dihydroxy-2-cyclopenten-1-yl) moiety of the queuosine in the wobble position of the QUC anticodon. The protein is Glutamyl-Q tRNA(Asp) synthetase of Salmonella typhi.